Here is a 757-residue protein sequence, read N- to C-terminus: Double zinc ribbon and ankyrin repeat-containing protein 1 (757 aa).

2 consecutive DZANK-type zinc fingers follow at residues 230-290 (CAHC…VVCE) and 359-407 (CSRC…GSCG). ANK repeat units follow at residues 631–662 (ENRL…DPNC) and 666–695 (QGRP…DIDQ).

Interacts with NINL. Associates with DYNC1H1 and multiple dynein intermediate and light chains as well as actin-binding proteins. As to expression, expressed in retina.

The protein resides in the cell projection. It is found in the cilium. Involved in vesicle transport in photoreceptor cells. This Rattus norvegicus (Rat) protein is Double zinc ribbon and ankyrin repeat-containing protein 1.